Reading from the N-terminus, the 643-residue chain is RNA-binding protein RO60 (643 aa).

The TROVE domain maps to 63 to 473; that stretch reads VENNAGGFVF…AFVNAPPTGK (411 aa). The segment at 186–390 is RNA-binding; the sequence is RTPTHLFEFV…SMPMTAMIRN (205 aa). The segment at 465–643 is VWFA-like domain; the sequence is FVNAPPTGKR…IVHEFVTGKI (179 aa). A divalent metal cation-binding residues include S482, S484, and T549.

This sequence belongs to the Ro 60 kDa family.

It localises to the cytoplasm. In terms of biological role, RNA-binding protein that binds to misfolded non-coding RNAs, pre-5S rRNA, and several small cytoplasmic RNA molecules known as Y RNAs. This is RNA-binding protein RO60 from Caenorhabditis elegans.